We begin with the raw amino-acid sequence, 57 residues long: Toxin GhoT (57 aa).

A run of 2 helical transmembrane segments spans residues 7–27 (ILIFYVIGVNISFVIIWFISH) and 37–57 (AFLVGITWPMSLPVALLFSLF).

It belongs to the GhoT/OrtT toxin family.

It is found in the cell inner membrane. Functionally, toxic component of a type V toxin-antitoxin (TA) system. Causes membrane damage when induced by MqsR, slowing cell growth and leading to the formation of dormant persister cells; involved with GhoS, its antitoxin, in reducing cell growth during antibacterial stress. Its toxic effects are neutralized by GhoS, which digests ghoT transcripts in a sequence-specific manner. The chain is Toxin GhoT from Escherichia coli O157:H7.